A 511-amino-acid polypeptide reads, in one-letter code: Inner membrane ABC transporter permease protein YnjC (511 aa).

The Cytoplasmic portion of the chain corresponds to 1–8; sequence MATPLRYA. Residues 9–29 form a helical membrane-spanning segment; sequence LIFLLWAMVAVIYAPLIPAAL. The Periplasmic portion of the chain corresponds to 30–62; that stretch reads TLISPALSLTHWQALFADPQLPQALLATLVSTT. The ABC transmembrane type-1 1 domain occupies 54–255; that stretch reads LLATLVSTTI…MLLLAAYVLL (202 aa). Residues 63-83 form a helical membrane-spanning segment; it reads IAAVGALLIALLVIVALWPGP. The Cytoplasmic portion of the chain corresponds to 84 to 91; it reads KWQRMCAR. Residues 92–112 traverse the membrane as a helical segment; sequence LPWLLAIPHVAFATSALLLFA. At 113 to 130 the chain is on the periplasmic side; it reads DGGLLYDYFPYFTPPMDR. Residues 131 to 151 traverse the membrane as a helical segment; that stretch reads FGIGLGLTLAVKESAFLLWIL. Residues 152-189 are Cytoplasmic-facing; the sequence is AAVLSEKWLLQQVIVLDSLGYSRWQCLNWLLLPSVAPA. A helical membrane pass occupies residues 190–210; it reads LAMAMLAIVAWSLSVVDVAII. The Periplasmic portion of the chain corresponds to 211–239; the sequence is LGPGNPPTLAVISWQWLTQGDIDQQTKGA. A helical membrane pass occupies residues 240 to 260; sequence LASLLLMLLLAAYVLLSYLLW. Over 261–284 the chain is Cytoplasmic; the sequence is RSWRRTIPRVDGVRKPATPLLPGN. Residues 285–305 form a helical membrane-spanning segment; that stretch reads TLAIFLPLTGVLCVVLLAILA. At 306 to 318 the chain is on the periplasmic side; the sequence is DQSTINSEALINS. Positions 315-496 constitute an ABC transmembrane type-1 2 domain; it reads LINSLTMGLV…LLPLIIFALT (182 aa). Residues 319-339 traverse the membrane as a helical segment; it reads LTMGLVATFIALLLLLLWLEW. Residues 340–345 are Cytoplasmic-facing; the sequence is GPQRRQ. Residues 346-366 traverse the membrane as a helical segment; the sequence is LWLWLPILLPALPLVAGQYTL. The Periplasmic portion of the chain corresponds to 367 to 374; that stretch reads ALWLKLDG. The chain crosses the membrane as a helical span at residues 375 to 395; it reads SWTAVVWGHLLWVMPWMLFIL. At 396–432 the chain is on the cytoplasmic side; sequence QPAWQRIDSRLILIAQTLGWSRAKIFFYVKCPLMLRP. A helical transmembrane segment spans residues 433 to 453; sequence VLIAFAVGFAVGIAQYMPTLW. At 454–485 the chain is on the periplasmic side; that stretch reads LGAGRFPTLTTEAVALSSGGSNGILAAQALWQ. The helical transmembrane segment at 486–506 threads the bilayer; sequence LLLPLIIFALTALVAKWVGYV. The Cytoplasmic segment spans residues 507-511; sequence RQGLR.

Belongs to the binding-protein-dependent transport system permease family.

It localises to the cell inner membrane. Probably part of the binding-protein-dependent transport system YnjCD. Probably responsible for the translocation of the substrate across the membrane. The sequence is that of Inner membrane ABC transporter permease protein YnjC (ynjC) from Escherichia coli (strain K12).